The primary structure comprises 350 residues: Geranylgeranyl diphosphate synthase (350 aa).

Positions 70, 73, and 102 each coordinate isopentenyl diphosphate. D109 and D113 together coordinate Mg(2+). The DDXXD motif signature appears at 109–113; sequence DDVMD. R119 provides a ligand contact to isopentenyl diphosphate. A DDXXD motif motif is present at residues 240 to 244; sequence DDLIG.

Belongs to the FPP/GGPP synthase family. The cofactor is Mg(2+).

The catalysed reaction is isopentenyl diphosphate + (2E,6E)-farnesyl diphosphate = (2E,6E,10E)-geranylgeranyl diphosphate + diphosphate. It participates in isoprenoid biosynthesis; geranylgeranyl diphosphate biosynthesis; geranylgeranyl diphosphate from farnesyl diphosphate and isopentenyl diphosphate: step 1/1. In terms of biological role, catalyzes the condensation of isopentenyl pyrophosphate (IPP) with (2E,6E)-farnesyl diphosphate (E,E-FPP) to yield geranylgeranyl diphosphate (GGPP). The protein is Geranylgeranyl diphosphate synthase of Mycobacterium tuberculosis (strain ATCC 25618 / H37Rv).